An 839-amino-acid polypeptide reads, in one-letter code: Protein translocase subunit SecA (839 aa).

Residues Gln-85, Gly-103 to Thr-107, and Asp-493 contribute to the ATP site. Positions Gln-780–Ser-790 are enriched in basic and acidic residues. Positions Gln-780 to Ser-839 are disordered. Residues Gln-791–Thr-809 are compositionally biased toward polar residues. Zn(2+) is bound by residues Cys-821, Cys-823, Cys-832, and His-833. A compositionally biased stretch (basic residues) spans Lys-827–Ser-839.

It belongs to the SecA family. As to quaternary structure, monomer and homodimer. Part of the essential Sec protein translocation apparatus which comprises SecA, SecYEG and auxiliary proteins SecDF. Other proteins may also be involved. Zn(2+) is required as a cofactor.

Its subcellular location is the cell membrane. The protein localises to the cytoplasm. The enzyme catalyses ATP + H2O + cellular proteinSide 1 = ADP + phosphate + cellular proteinSide 2.. Part of the Sec protein translocase complex. Interacts with the SecYEG preprotein conducting channel. Has a central role in coupling the hydrolysis of ATP to the transfer of proteins into and across the cell membrane, serving as an ATP-driven molecular motor driving the stepwise translocation of polypeptide chains across the membrane. The sequence is that of Protein translocase subunit SecA from Streptococcus pyogenes serotype M3 (strain ATCC BAA-595 / MGAS315).